The chain runs to 708 residues: Ion-translocating oxidoreductase complex subunit C (708 aa).

2 consecutive 4Fe-4S ferredoxin-type domains span residues 369–397 (GEPQ…QQLY) and 407–436 (KATT…VQYF). [4Fe-4S] cluster-binding residues include Cys377, Cys380, Cys383, Cys387, Cys416, Cys419, Cys422, and Cys426. The segment at 630–682 (AKARKLEQQQANAEPEEQIDPRKAAVEAAIARAKARKLEQQQANAEPEEQIDP) is disordered.

This sequence belongs to the 4Fe4S bacterial-type ferredoxin family. RnfC subfamily. The complex is composed of six subunits: RsxA, RsxB, RsxC, RsxD, RsxE and RsxG. The cofactor is [4Fe-4S] cluster.

Its subcellular location is the cell inner membrane. Part of a membrane-bound complex that couples electron transfer with translocation of ions across the membrane. Required to maintain the reduced state of SoxR. This chain is Ion-translocating oxidoreductase complex subunit C, found in Escherichia coli O1:K1 / APEC.